The primary structure comprises 278 residues: BPI fold-containing family A member 1 (278 aa).

The N-terminal stretch at 1-19 is a signal peptide; sequence MFLVGSLVVLCGLLAHSTA. 4 Repeat repeats span residues 23–28, 30–36, 39–44, and 47–52; these read GLPLPL, QGPPLPL, GPPLPL, and GQLLPL. The segment at 23–52 is 4 X 6 AA repeats of G-[LPQ]-[PL]-L-P-L; sequence GLPLPLGQGPPLPLNQGPPLPLNQGQLLPL. Positions 112-117 are important for surfactant activity and antibacterial properties; the sequence is LVGGLL. N-linked (GlcNAc...) asparagine glycans are attached at residues N182 and N228. C204 and C246 are disulfide-bonded.

This sequence belongs to the BPI/LBP/Plunc superfamily. Plunc family. Monomer. Interacts (via N-terminus) with SCNN1B, a subunit of the heterotrimeric epithelial sodium channel (ENaC); this inhibits proteolytic activation of ENaC. As to expression, detected in airway epithelia (trachea and lung) and in bronchoalveolar fluid (at protein level). Upper airways, nasopharyngeal epithelium and thymus. Highest expression in the trachea and progressive decrease from proximal (bronchial) to distal (bronchiolar) airways. No expression is detected in the terminal bronchioles, respiratory bronchioles or lung alveoli.

Its subcellular location is the secreted. Lipid-binding protein which shows high specificity for the surfactant phospholipid dipalmitoylphosphatidylcholine (DPPC). Plays a role in the innate immune responses of the upper airways. Reduces the surface tension in secretions from airway epithelia and inhibits the formation of biofilm by pathogenic Gram-negative bacteria, such as P.aeruginosa and K.pneumoniae. Negatively regulates proteolytic cleavage of SCNN1G, an event that is required for activation of the epithelial sodium channel (ENaC), and thereby contributes to airway surface liquid homeostasis and proper clearance of mucus. Plays a role in the airway inflammatory response after exposure to irritants. May attract macrophages and neutrophils. This is BPI fold-containing family A member 1 (Bpifa1) from Mus musculus (Mouse).